Here is a 635-residue protein sequence, read N- to C-terminus: MEFGSTEDGRHDKFPVGMRVLAVDDNPTCLRKLEELLLRCKYHVTKTMESRKALEMLRENSNMFDLVISDVEMPDTDGFKLLEIGLEMDLPVIMLSAHSDYDSVMKGIIHGACDYLVKPVGLKELQNIWHHVVKKNIKSYAKLLPPSESDSVPSASRKRKDKVNDSGDEDDSDREEDDGEGSEQDGDGSGTRKKPRVVWSQELHQKFVSAVQQLGLDKAVPKKILDLMSIEGLTRENVASHLQKYRLYLKKIDEGQQQNMTPDAFGTRDSSYFQMAQLDGLRDFTAARQIPSSGLLSRSHLTKLQPPMYSSINLQGMNSSSFIQQGHHQNSSNSANPFGTYHSTLSPRIQNVNLFQRTSSPLEPLQFPRSKSYIGDFKGLGDRAIGGSFLDTCMPFGSSSTSLPSASTNPLMLQANYTQPLHIASDGIQPCIEGTPSNSASPNISFQGLSRFPGHSWQGNLNTTRFPPSSLPLNLAFLPDQVTCAGNNLGDCTSLVSAENPGGEMQCDPQLLGGFMQNVNPLGGQKWEQQNCTMLNNPFGNIEYPLPADNMVFRDNNSTRSKGLDESLMNPIDNSQEYVGKATTMLDPEMKSGKPENDNQHDVFDDIMNEMMKQEENNGMVPVATRFGFDSFPPP.

Positions arginine 19–valine 133 constitute a Response regulatory domain. Aspartate 70 bears the 4-aspartylphosphate mark. Disordered regions lie at residues leucine 144 to arginine 196 and isoleucine 323 to histidine 342. A compositionally biased stretch (acidic residues) spans serine 166 to glycine 186. Positions lysine 193–arginine 196 match the Nuclear localization signal motif. Positions arginine 196–arginine 246 form a DNA-binding region, myb-like GARP.

The protein belongs to the ARR family. Type-B subfamily. Binds the target DNA as a monomer. Post-translationally, two-component system major event consists of a His-to-Asp phosphorelay between a sensor histidine kinase (HK) and a response regulator (RR). In plants, the His-to-Asp phosphorelay involves an additional intermediate named Histidine-containing phosphotransfer protein (HPt). This multistep phosphorelay consists of a His-Asp-His-Asp sequential transfer of a phosphate group between first a His and an Asp of the HK protein, followed by the transfer to a conserved His of the HPt protein and finally the transfer to an Asp in the receiver domain of the RR protein. In terms of tissue distribution, predominantly expressed in young leaf tissue developing anthers, and siliques.

Its subcellular location is the nucleus. In terms of biological role, transcriptional activator that binds specifically to the DNA sequence 5'-[AG]GATT-3'. Functions as a response regulator involved in His-to-Asp phosphorelay signal transduction system. Phosphorylation of the Asp residue in the receiver domain activates the ability of the protein to promote the transcription of target genes. Could directly activate some type-A response regulators in response to cytokinins. The chain is Two-component response regulator ARR18 (ARR18) from Arabidopsis thaliana (Mouse-ear cress).